Reading from the N-terminus, the 79-residue chain is Cell division protein ZapB (79 aa).

Residues 4–78 are a coiled coil; it reads EVFEKLESKV…LRALLGKMEE (75 aa).

Belongs to the ZapB family. Homodimer. The ends of the coiled-coil dimer bind to each other, forming polymers. Interacts with FtsZ.

The protein resides in the cytoplasm. Non-essential, abundant cell division factor that is required for proper Z-ring formation. It is recruited early to the divisome by direct interaction with FtsZ, stimulating Z-ring assembly and thereby promoting cell division earlier in the cell cycle. Its recruitment to the Z-ring requires functional FtsA or ZipA. The protein is Cell division protein ZapB of Serratia proteamaculans (strain 568).